The sequence spans 593 residues: ATPase family AAA domain-containing protein 3-A (593 aa).

The interval 1-64 (MSWLFGLNKG…AKAARELDQS (64 aa)) is disordered. The Mitochondrial intermembrane segment spans residues 1–242 (MSWLFGLNKG…FRTFISDWDK (242 aa)). The segment covering 15–27 (PGVPGFPEPPSPP) has biased composition (pro residues). Basic and acidic residues-rich tracts occupy residues 33–44 (GGDKNKPKDKWS) and 53–64 (RAAKAARELDQS). The stretch at 52–215 (ERAAKAAREL…QIRLKAAEHR (164 aa)) forms a coiled coil. Residues 243–260 (VTATVAGLTLLAVGVYTA) traverse the membrane as a helical segment. Over 261-593 (KNATGVAGRY…LQPLLEGTQV (333 aa)) the chain is Mitochondrial matrix. 348 to 355 (GPPGTGKT) is an ATP binding site.

The protein belongs to the AAA ATPase family. Can form homooligomers. Homodimer formation at the N-terminus may be regulated by ATP and is required for the interaction with the inner surface of the mitochondrial outer membrane and correct mitochondrial homeostasis.

It is found in the mitochondrion inner membrane. The protein localises to the mitochondrion matrix. The protein resides in the mitochondrion nucleoid. It catalyses the reaction ATP + H2O = ADP + phosphate + H(+). Essential for mitochondrial network organization, mitochondrial metabolism and cell growth at organism and cellular level. May play an important role in mitochondrial protein synthesis. May also participate in mitochondrial DNA replication. May bind to mitochondrial DNA D-loops and contribute to nucleoid stability. Required for enhanced channeling of cholesterol for hormone-dependent steroidogenesis. Involved in mitochondrial-mediated antiviral innate immunity. Required to protect mitochondria from the PERK-mediated unfolded protein response: specifically inhibits the activity of EIF2AK3/PERK at mitochondria-endoplasmic reticulum contact sites, thereby providing a safe haven for mitochondrial protein translation during endoplasmic reticulum stress. Ability to inhibit EIF2AK3/PERK is independent of its ATPase activity. Also involved in the mitochondrial DNA damage response by promoting signaling between damaged genomes and the mitochondrial membrane, leading to activation of the integrated stress response (ISR). This is ATPase family AAA domain-containing protein 3-A (atad3-a) from Xenopus laevis (African clawed frog).